Here is a 221-residue protein sequence, read N- to C-terminus: Membrane-bound lytic murein transglycosylase E (221 aa).

Belongs to the transglycosylase Slt family.

It catalyses the reaction Exolytic cleavage of the (1-&gt;4)-beta-glycosidic linkage between N-acetylmuramic acid (MurNAc) and N-acetylglucosamine (GlcNAc) residues in peptidoglycan, from either the reducing or the non-reducing ends of the peptidoglycan chains, with concomitant formation of a 1,6-anhydrobond in the MurNAc residue.. Its function is as follows. Murein-degrading enzyme. May play a role in recycling of muropeptides during cell elongation and/or cell division. The chain is Membrane-bound lytic murein transglycosylase E (mltE) from Buchnera aphidicola subsp. Acyrthosiphon pisum (strain APS) (Acyrthosiphon pisum symbiotic bacterium).